The chain runs to 308 residues: Prephenate dehydratase (308 aa).

The Prephenate dehydratase domain maps to 3 to 187; the sequence is RITYLGPEGT…AHTRFVLVGR (185 aa). Residues 201–278 form the ACT domain; the sequence is SVVLGLGNVP…EDVRYLGSWP (78 aa).

In terms of assembly, homodimer.

The enzyme catalyses prephenate + H(+) = 3-phenylpyruvate + CO2 + H2O. It participates in amino-acid biosynthesis; L-phenylalanine biosynthesis; phenylpyruvate from prephenate: step 1/1. The polypeptide is Prephenate dehydratase (pheA) (Mycobacteroides abscessus (strain ATCC 19977 / DSM 44196 / CCUG 20993 / CIP 104536 / JCM 13569 / NCTC 13031 / TMC 1543 / L948) (Mycobacterium abscessus)).